The sequence spans 288 residues: Acetyl-coenzyme A carboxylase carboxyl transferase subunit beta (288 aa).

Positions 34–288 (LFAKCPACKH…HLVAFHGGVS (255 aa)) constitute a CoA carboxyltransferase N-terminal domain. Positions 38, 41, 56, and 59 each coordinate Zn(2+). The C4-type zinc finger occupies 38-59 (CPACKHMIYQKDLGPAKICPTC).

It belongs to the AccD/PCCB family. As to quaternary structure, acetyl-CoA carboxylase is a heterohexamer composed of biotin carboxyl carrier protein (AccB), biotin carboxylase (AccC) and two subunits each of ACCase subunit alpha (AccA) and ACCase subunit beta (AccD). The cofactor is Zn(2+).

It localises to the cytoplasm. The enzyme catalyses N(6)-carboxybiotinyl-L-lysyl-[protein] + acetyl-CoA = N(6)-biotinyl-L-lysyl-[protein] + malonyl-CoA. It participates in lipid metabolism; malonyl-CoA biosynthesis; malonyl-CoA from acetyl-CoA: step 1/1. Its function is as follows. Component of the acetyl coenzyme A carboxylase (ACC) complex. Biotin carboxylase (BC) catalyzes the carboxylation of biotin on its carrier protein (BCCP) and then the CO(2) group is transferred by the transcarboxylase to acetyl-CoA to form malonyl-CoA. The chain is Acetyl-coenzyme A carboxylase carboxyl transferase subunit beta from Streptococcus equi subsp. zooepidemicus (strain MGCS10565).